Here is a 706-residue protein sequence, read N- to C-terminus: MVDPVPEEEKEGAEPGGSEGDEATASEPPDAQGAQQPAASSASASAAAPRKAEVPCGAEGGRREQSPLLHLDLFNFACPEAEGSRYVLTSPRSLEACARCAVKPVELLPRALADLVREAPGRSMRVATGLYEAYEAERLAKLQQCRAERERIMREEKRRLFTPKGPAAAPASASASASASALSGGSSSSCSSSSSLPASPASRVARRTSPSPPARSRPPPAGSRTGRKSHSLDSLSRRRDGALSSESGASSSSYSGESLRELRWPPRASARNSCPAGSASSAPNPLGRPSALALVPLTARSFSLGDLSHSPQTAQHVERIVRQVRAERGLRGVPERDRKIAALMLARHQEERLLLEQRAAAHGQWEQQRVRAEQRREREEREKQRALERGRRAWAAQVEERRGRRGREEREAARRRQQQCERSEERRRELAERQGLLRRERVERAARDDRLRKLQQEQNLKQREEGRQEGRERAELVRRERAQRAARARERQEGQLQREKRELSRAERARHEALLRGRVRQQQEEREGLRSSLEASLGRAQENYEQLQEQRARELRERARREELQGRRAKEAAERKEREHQAHLEALARAGERRLQHAAQVAEEAVQQKARRVVQTRLEKERAQRANKEKVERDEDCRRRELLQAIGRKLERSEQLSRERRSALESARSTARASFHVREKVREETNTRSFDRMVREAQLHASLDRK.

A compositionally biased stretch (acidic residues) spans M1–E11. 3 disordered regions span residues M1–R63, A179–L262, and A268–G287. Composition is skewed to low complexity over residues P28–P49 and A179–S209. Residues P210–A221 show a composition bias toward pro residues. Positions A242–E257 are enriched in low complexity. A Phosphoserine modification is found at S310. Positions A360–Q624 form a coiled coil. Disordered regions lie at residues Q364–A386, V398–E425, D448–H580, and E651–K706. Basic and acidic residues predominate over residues Q368 to A386. Basic and acidic residues-rich tracts occupy residues D448 to L529, Q548 to H580, and E651 to A663. The span at L664–S674 shows a compositional bias: low complexity. Residues H676–K706 show a composition bias toward basic and acidic residues.

In Mus musculus (Mouse), this protein is Coiled-coil domain-containing protein 177 (Ccdc177).